The following is a 495-amino-acid chain: Probable leucine aminopeptidase 2 (495 aa).

The first 21 residues, 1 to 21 (MKSQLLSLAVAVTTISQGVVG), serve as a signal peptide directing secretion. In terms of domain architecture, PA spans 130–216 (MAELVVAKNN…SQEDGKNLAT (87 aa)). Residues Asn-142 and Asn-235 are each glycosylated (N-linked (GlcNAc...) asparagine). Residues His-259 and Asp-271 each coordinate Zn(2+). Residue Asn-272 is glycosylated (N-linked (GlcNAc...) asparagine). Catalysis depends on Glu-303, which acts as the Proton acceptor. The Zn(2+) site is built by Glu-304 and Asp-332. The N-linked (GlcNAc...) asparagine glycan is linked to Asn-352. His-430 serves as a coordination point for Zn(2+).

Belongs to the peptidase M28 family. M28A subfamily. As to quaternary structure, monomer. It depends on Zn(2+) as a cofactor.

The protein resides in the secreted. Extracellular aminopeptidase that releases a wide variety of amino acids from natural peptides and contributes to pathogenicity. The protein is Probable leucine aminopeptidase 2 (LAP2) of Trichophyton verrucosum (strain HKI 0517).